The following is a 31-amino-acid chain: Sarcolipin (31 aa).

Residues 1 to 7 lie on the Cytoplasmic side of the membrane; sequence MERSTQE. The chain crosses the membrane as a helical span at residues 8–26; the sequence is LFINFTVVLITVLLMWLLV. Topologically, residues 27-31 are lumenal; it reads RSYQY.

The protein belongs to the sarcolipin family. As to quaternary structure, homooligomer. Can also form heterooligomers with other sarcoplasmic/endoplasmic reticulum calcium ATPase (SERCA) regulators ARLN, ERLN, PLN and STRIT1/DWORF. Monomer. Interacts with calcium ATPase ATP2A1/SERCA1. Interacts as a monomer with ATP2A2/SERCA2; the interaction decreases ATP2A2 Ca(2+) affinity. Interacts with VMP1; VMP1 competes with PLN and SLN to prevent them from forming an inhibitory complex with ATP2A2.

The protein localises to the sarcoplasmic reticulum membrane. It is found in the endoplasmic reticulum membrane. Reversibly inhibits the activity of ATP2A1/SERCA1 and ATP2A2/SERCA2 in sarcoplasmic reticulum by decreasing the apparent affinity of the ATPase for Ca(2+). Also inhibits the activity of ATP2A3/SERCA3. Modulates calcium re-uptake during muscle relaxation and plays an important role in calcium homeostasis in muscle. Required for muscle-based, non-shivering thermogenesis. This chain is Sarcolipin (Sln), found in Rattus norvegicus (Rat).